Here is a 396-residue protein sequence, read N- to C-terminus: Microcin B17-processing protein McbD (396 aa).

One can recognise a YcaO domain in the interval 41–396; that stretch reads ASAAGETLKS…VRESKMVPFP (356 aa).

Its subcellular location is the cytoplasm. Its function is as follows. Necessary to process the inactive microcin B17 (McbA) precursor into the active peptide. The chain is Microcin B17-processing protein McbD (mcbD) from Escherichia coli.